Consider the following 92-residue polypeptide: Large ribosomal subunit protein bL34m (92 aa).

The N-terminal 46 residues, Met-1 to Gly-46, are a transit peptide targeting the mitochondrion. The residue at position 71 (Ser-71) is a Phosphoserine.

The protein belongs to the bacterial ribosomal protein bL34 family. As to quaternary structure, component of the mitochondrial ribosome large subunit (39S) which comprises a 16S rRNA and about 50 distinct proteins.

It localises to the mitochondrion. In Mus musculus (Mouse), this protein is Large ribosomal subunit protein bL34m (Mrpl34).